Reading from the N-terminus, the 425-residue chain is Tryptophan synthase beta chain (425 aa).

Lys107 carries the post-translational modification N6-(pyridoxal phosphate)lysine.

This sequence belongs to the TrpB family. Tetramer of two alpha and two beta chains. Pyridoxal 5'-phosphate serves as cofactor.

It carries out the reaction (1S,2R)-1-C-(indol-3-yl)glycerol 3-phosphate + L-serine = D-glyceraldehyde 3-phosphate + L-tryptophan + H2O. The protein operates within amino-acid biosynthesis; L-tryptophan biosynthesis; L-tryptophan from chorismate: step 5/5. Its function is as follows. The beta subunit is responsible for the synthesis of L-tryptophan from indole and L-serine. In Synechococcus sp. (strain JA-2-3B'a(2-13)) (Cyanobacteria bacterium Yellowstone B-Prime), this protein is Tryptophan synthase beta chain.